The primary structure comprises 405 residues: uncharacterized protein (405 aa).

12 consecutive transmembrane segments (helical) span residues 19–39 (IVSI…PLAV), 47–67 (VMGF…FATL), 85–105 (IVVF…TAGL), 107–127 (ASLP…LGIG), 156–176 (GIVT…FYHW), 178–198 (GLQA…LLAI), 224–244 (GMAL…ITLF), 252–272 (GAAF…LLFP), 283–303 (VAMI…VATM), 309–329 (IGVL…GVVA), 344–364 (TYTV…GLVM), and 366–386 (WAGV…ALLL).

This sequence belongs to the major facilitator superfamily. YhhS family.

It is found in the cell inner membrane. This is an uncharacterized protein from Escherichia coli O6:H1 (strain CFT073 / ATCC 700928 / UPEC).